Consider the following 359-residue polypeptide: Large ribosomal subunit protein bL27m (359 aa).

The N-terminal 24 residues, 1 to 24 (MSFWKVATLWQMPLRPSILVQVRT), are a transit peptide targeting the mitochondrion. Positions 29–48 (AAGSRTSMKDSAGRRLGPKK) are disordered. Residues 35-48 (SMKDSAGRRLGPKK) show a composition bias toward basic and acidic residues.

It belongs to the bacterial ribosomal protein bL27 family.

The protein localises to the mitochondrion. Component of the large subunit of mitochondrial ribosome. This Eremothecium gossypii (strain ATCC 10895 / CBS 109.51 / FGSC 9923 / NRRL Y-1056) (Yeast) protein is Large ribosomal subunit protein bL27m (MRPL2).